Consider the following 101-residue polypeptide: Small ribosomal subunit protein uS14 (101 aa).

This sequence belongs to the universal ribosomal protein uS14 family. As to quaternary structure, part of the 30S ribosomal subunit. Contacts proteins S3 and S10.

Binds 16S rRNA, required for the assembly of 30S particles and may also be responsible for determining the conformation of the 16S rRNA at the A site. The protein is Small ribosomal subunit protein uS14 of Shewanella halifaxensis (strain HAW-EB4).